We begin with the raw amino-acid sequence, 469 residues long: tRNA-2-methylthio-N(6)-dimethylallyladenosine synthase (469 aa).

Residues 27–142 form the MTTase N-terminal domain; that stretch reads KKVYIRTFGC…LPQMLAQRAR (116 aa). The [4Fe-4S] cluster site is built by cysteine 36, cysteine 73, cysteine 105, cysteine 179, cysteine 183, and cysteine 186. Residues 165–398 enclose the Radical SAM core domain; sequence KVDGAAAFVS…QATIEDNVRR (234 aa). Residues 401-467 form the TRAM domain; that stretch reads ERRVGTVQRV…PHSLRGEPVL (67 aa).

It belongs to the methylthiotransferase family. MiaB subfamily. In terms of assembly, monomer. [4Fe-4S] cluster is required as a cofactor.

Its subcellular location is the cytoplasm. It carries out the reaction N(6)-dimethylallyladenosine(37) in tRNA + (sulfur carrier)-SH + AH2 + 2 S-adenosyl-L-methionine = 2-methylsulfanyl-N(6)-dimethylallyladenosine(37) in tRNA + (sulfur carrier)-H + 5'-deoxyadenosine + L-methionine + A + S-adenosyl-L-homocysteine + 2 H(+). Functionally, catalyzes the methylthiolation of N6-(dimethylallyl)adenosine (i(6)A), leading to the formation of 2-methylthio-N6-(dimethylallyl)adenosine (ms(2)i(6)A) at position 37 in tRNAs that read codons beginning with uridine. The protein is tRNA-2-methylthio-N(6)-dimethylallyladenosine synthase of Leptothrix cholodnii (strain ATCC 51168 / LMG 8142 / SP-6) (Leptothrix discophora (strain SP-6)).